The primary structure comprises 227 residues: Cytochrome c oxidase subunit 2 (227 aa).

At 1-14 (MAYPHQLGFQDATS) the chain is on the mitochondrial intermembrane side. A helical membrane pass occupies residues 15-45 (PIMEELLSFHDHTLMIVFLISSLVLYLISLM). The Mitochondrial matrix segment spans residues 46 to 59 (LTTKLTHTSTMDAQ). Residues 60–87 (EVETVWTILPAIILIMIALPSLRILYMM) form a helical membrane-spanning segment. Residues 88-227 (DEINNPLLTV…SFENWTTSMT (140 aa)) lie on the Mitochondrial intermembrane side of the membrane. 6 residues coordinate Cu cation: His-161, Cys-196, Glu-198, Cys-200, His-204, and Met-207. Mg(2+) is bound at residue Glu-198.

The protein belongs to the cytochrome c oxidase subunit 2 family. In terms of assembly, component of the cytochrome c oxidase (complex IV, CIV), a multisubunit enzyme composed of 14 subunits. The complex is composed of a catalytic core of 3 subunits MT-CO1, MT-CO2 and MT-CO3, encoded in the mitochondrial DNA, and 11 supernumerary subunits COX4I, COX5A, COX5B, COX6A, COX6B, COX6C, COX7A, COX7B, COX7C, COX8 and NDUFA4, which are encoded in the nuclear genome. The complex exists as a monomer or a dimer and forms supercomplexes (SCs) in the inner mitochondrial membrane with NADH-ubiquinone oxidoreductase (complex I, CI) and ubiquinol-cytochrome c oxidoreductase (cytochrome b-c1 complex, complex III, CIII), resulting in different assemblies (supercomplex SCI(1)III(2)IV(1) and megacomplex MCI(2)III(2)IV(2)). Found in a complex with TMEM177, COA6, COX18, COX20, SCO1 and SCO2. Interacts with TMEM177 in a COX20-dependent manner. Interacts with COX20. Interacts with COX16. The cofactor is Cu cation.

The protein localises to the mitochondrion inner membrane. It carries out the reaction 4 Fe(II)-[cytochrome c] + O2 + 8 H(+)(in) = 4 Fe(III)-[cytochrome c] + 2 H2O + 4 H(+)(out). In terms of biological role, component of the cytochrome c oxidase, the last enzyme in the mitochondrial electron transport chain which drives oxidative phosphorylation. The respiratory chain contains 3 multisubunit complexes succinate dehydrogenase (complex II, CII), ubiquinol-cytochrome c oxidoreductase (cytochrome b-c1 complex, complex III, CIII) and cytochrome c oxidase (complex IV, CIV), that cooperate to transfer electrons derived from NADH and succinate to molecular oxygen, creating an electrochemical gradient over the inner membrane that drives transmembrane transport and the ATP synthase. Cytochrome c oxidase is the component of the respiratory chain that catalyzes the reduction of oxygen to water. Electrons originating from reduced cytochrome c in the intermembrane space (IMS) are transferred via the dinuclear copper A center (CU(A)) of subunit 2 and heme A of subunit 1 to the active site in subunit 1, a binuclear center (BNC) formed by heme A3 and copper B (CU(B)). The BNC reduces molecular oxygen to 2 water molecules using 4 electrons from cytochrome c in the IMS and 4 protons from the mitochondrial matrix. The sequence is that of Cytochrome c oxidase subunit 2 (MT-CO2) from Georychus capensis (Cape mole rat).